A 385-amino-acid polypeptide reads, in one-letter code: MSVASFFSSLPARPFGYKDGRGRTGMVPTTDIGRRMVKPPVLACRPIESNTYHGSVTSVFLTKSSRSPSPSLSPTPTALDDEIVLDLKPFLIIYKSGRIERFLGTTVIPACPEVATKDVVIDPATGVSVRLYLPNVVDLPSKKLPVLVYFHGGGFVIENTGSPNYHNYLTLLAAKAGVLIVSINYRLAPEYPLPASYDDCMAGFNWVVSHSAGPALEPWLAQHGDFSQILLSGDSAGGNVTHYVAMRADAGVIEGVAIVHPYFLGSEPVGNEINDPANIEFHDKLWRLAAPDTEGLDDPLINPVAPGAPSLAGLKCKRAVVFVAGNDFLVERGRMYYEALVKSGWRGEAELVQHEGVGHVFHLSDYSGDISVAMMTKLIAFLKGE.

The N-terminal 77 residues, 1–77, are a transit peptide targeting the chloroplast; that stretch reads MSVASFFSSL…PSPSLSPTPT (77 aa). The active-site Acyl-ester intermediate is S235. Catalysis depends on charge relay system residues D327 and H359.

This sequence belongs to the AB hydrolase superfamily. Homodimer. As to expression, expressed in roots, stems, leaves, petals, stamens and pistils, but not in bulb scales.

It localises to the plastid. The protein resides in the chloroplast. It catalyses the reaction 6-tuliposide A = tulipalin A + D-glucose. Inhibited by NaF, AgNO(3), HgCl(2), CuSO(4) and phenylmethylsulfonyl fluoride (PMSF). In terms of biological role, lactone-forming carboxylesterases, specifically catalyzing intramolecular transesterification, but not hydrolysis. Involved in the biosynthesis of tulipalins, defensive chemicals that show antimicrobial activities against a broad range of strains of bacteria and fungi. Substrates are 6-tuliposide A &gt; 6-tuliposide B. This is Tuliposide A-converting enzyme 1, chloroplastic (TCEA1) from Tulipa gesneriana (Garden tulip).